Reading from the N-terminus, the 89-residue chain is Small ribosomal subunit protein uS15 (89 aa).

Belongs to the universal ribosomal protein uS15 family. In terms of assembly, part of the 30S ribosomal subunit. Forms a bridge to the 50S subunit in the 70S ribosome, contacting the 23S rRNA.

In terms of biological role, one of the primary rRNA binding proteins, it binds directly to 16S rRNA where it helps nucleate assembly of the platform of the 30S subunit by binding and bridging several RNA helices of the 16S rRNA. Its function is as follows. Forms an intersubunit bridge (bridge B4) with the 23S rRNA of the 50S subunit in the ribosome. The chain is Small ribosomal subunit protein uS15 from Geobacillus sp. (strain WCH70).